Consider the following 614-residue polypeptide: MAAEVPAVSTPLSPLVQVPQEEDEQAEVTTMILEDDAWVQEAVLQEDGPESEPFPQSAGKGSPQEEDAAEGPQGALVRFRELCRRWLRPEVHTKEQMLTVLPREIQAWLQEHRPESSEEAVALVEDLTQTFRHSDFEIQSENGENSNEDMFEGVESHGMFLNISGGEGGQQSDGDSDFERDCGSGGAQGHAPGEDPRVVPSEGREVGQLIGLQGTYLGEKPYECPQCGKTFSRKSHLITHERTHTGEKYYKCDECGKSFSDGSNFSRHQTTHTGEKPYKCRDCGKSFSRSANLITHQRIHTGEKPFQCAECGKSFSRSPNLIAHQRTHTGEKPYSCPECGKSFGNRSSLNTHQGIHTGEKPYACKECGESFSYNSNLIRHQRIHTGEKPYKCTECGQKFSQSSALITHRRTHTGEKPYQCGECGKNFSRSSNLATHRRTHLVEKPYKCGLCGKSFSQSSSLIAHQGTHTGEKPYECLTCGESFSWSSNLIKHQRTHTGEKPYRCGDCGKGFSQRSQLVVHQRTHTGEKPYKCLMCGKSFSRGSILVMHQRAHLGDKPYRCPECGKGFSWNSVLIIHQRIHTGEKPYRCPECGKGFSNSSNFITHQRTHLKEKLY.

Disordered stretches follow at residues 1-25, 42-73, and 162-200; these read MAAE…EDEQ, AVLQ…EGPQ, and NISG…RVVP. The SCAN box domain occupies 69-127; sequence AEGPQGALVRFRELCRRWLRPEVHTKEQMLTVLPREIQAWLQEHRPESSEEAVALVEDL. 14 consecutive C2H2-type zinc fingers follow at residues 222 to 244, 250 to 272, 278 to 300, 306 to 328, 334 to 356, 362 to 384, 390 to 412, 418 to 440, 446 to 468, 474 to 496, 502 to 524, 530 to 552, 558 to 580, and 586 to 608; these read YECP…ERTH, YKCD…QTTH, YKCR…QRIH, FQCA…QRTH, YSCP…QGIH, YACK…QRIH, YKCT…RRTH, YQCG…RRTH, YKCG…QGTH, YECL…QRTH, YRCG…QRTH, YKCL…QRAH, YRCP…QRIH, and YRCP…QRTH.

Belongs to the krueppel C2H2-type zinc-finger protein family. In terms of tissue distribution, in the adult, predominantly found in spermatids. Also present in the embryo.

The protein localises to the nucleus. May be involved in transcriptional regulation during the post-meiotic stages of spermatogenesis. This is Zinc finger and SCAN domain-containing protein 2 (Zscan2) from Mus musculus (Mouse).